Reading from the N-terminus, the 161-residue chain is Urease accessory protein UreE (161 aa).

Residues 133–161 are disordered; it reads EPEAGAYQSAPHSHSHAHDHPFVRLPAHS.

This sequence belongs to the UreE family.

Its subcellular location is the cytoplasm. Functionally, involved in urease metallocenter assembly. Binds nickel. Probably functions as a nickel donor during metallocenter assembly. The protein is Urease accessory protein UreE of Pseudomonas putida (strain W619).